The sequence spans 235 residues: Protein GrpE (235 aa).

Residues 1–18 are compositionally biased toward polar residues; that stretch reads MTDGNQKPDGNSGEQVTV. 2 disordered regions span residues 1–50 and 198–235; these read MTDG…DAAH and ESVDDGTAVADTAENDQADQGNSADTLGEQAESEPSGS. Over residues 19-35 the composition is skewed to basic and acidic residues; sequence TDKRRIDPETGEVRHVP.

Belongs to the GrpE family. In terms of assembly, homodimer.

Its subcellular location is the cytoplasm. In terms of biological role, participates actively in the response to hyperosmotic and heat shock by preventing the aggregation of stress-denatured proteins, in association with DnaK and GrpE. It is the nucleotide exchange factor for DnaK and may function as a thermosensor. Unfolded proteins bind initially to DnaJ; upon interaction with the DnaJ-bound protein, DnaK hydrolyzes its bound ATP, resulting in the formation of a stable complex. GrpE releases ADP from DnaK; ATP binding to DnaK triggers the release of the substrate protein, thus completing the reaction cycle. Several rounds of ATP-dependent interactions between DnaJ, DnaK and GrpE are required for fully efficient folding. The protein is Protein GrpE of Mycobacterium bovis (strain BCG / Pasteur 1173P2).